We begin with the raw amino-acid sequence, 71 residues long: Exodeoxyribonuclease 7 small subunit (71 aa).

This sequence belongs to the XseB family. In terms of assembly, heterooligomer composed of large and small subunits.

It localises to the cytoplasm. It catalyses the reaction Exonucleolytic cleavage in either 5'- to 3'- or 3'- to 5'-direction to yield nucleoside 5'-phosphates.. Functionally, bidirectionally degrades single-stranded DNA into large acid-insoluble oligonucleotides, which are then degraded further into small acid-soluble oligonucleotides. This Streptococcus suis (strain 98HAH33) protein is Exodeoxyribonuclease 7 small subunit.